The sequence spans 378 residues: Erythronate-4-phosphate dehydrogenase (378 aa).

Substrate contacts are provided by Ser45 and Thr66. Positions 146 and 175 each coordinate NAD(+). Residue Arg208 is part of the active site. Asp232 serves as a coordination point for NAD(+). Glu237 is a catalytic residue. The active-site Proton donor is His254. Gly257 lines the NAD(+) pocket. A substrate-binding site is contributed by Tyr258.

It belongs to the D-isomer specific 2-hydroxyacid dehydrogenase family. PdxB subfamily. Homodimer.

Its subcellular location is the cytoplasm. It carries out the reaction 4-phospho-D-erythronate + NAD(+) = (R)-3-hydroxy-2-oxo-4-phosphooxybutanoate + NADH + H(+). It participates in cofactor biosynthesis; pyridoxine 5'-phosphate biosynthesis; pyridoxine 5'-phosphate from D-erythrose 4-phosphate: step 2/5. Functionally, catalyzes the oxidation of erythronate-4-phosphate to 3-hydroxy-2-oxo-4-phosphonooxybutanoate. The polypeptide is Erythronate-4-phosphate dehydrogenase (Shigella boydii serotype 4 (strain Sb227)).